The following is a 245-amino-acid chain: 4-hydroxy-tetrahydrodipicolinate reductase (245 aa).

NAD(+) contacts are provided by residues 8–13 (GSTGKM), 78–80 (GTT), and 102–105 (SANM). H134 acts as the Proton donor/acceptor in catalysis. H135 contacts (S)-2,3,4,5-tetrahydrodipicolinate. K138 serves as the catalytic Proton donor. 144-145 (GT) is a (S)-2,3,4,5-tetrahydrodipicolinate binding site.

It belongs to the DapB family.

It localises to the cytoplasm. The catalysed reaction is (S)-2,3,4,5-tetrahydrodipicolinate + NAD(+) + H2O = (2S,4S)-4-hydroxy-2,3,4,5-tetrahydrodipicolinate + NADH + H(+). It catalyses the reaction (S)-2,3,4,5-tetrahydrodipicolinate + NADP(+) + H2O = (2S,4S)-4-hydroxy-2,3,4,5-tetrahydrodipicolinate + NADPH + H(+). It functions in the pathway amino-acid biosynthesis; L-lysine biosynthesis via DAP pathway; (S)-tetrahydrodipicolinate from L-aspartate: step 4/4. In terms of biological role, catalyzes the conversion of 4-hydroxy-tetrahydrodipicolinate (HTPA) to tetrahydrodipicolinate. In Rickettsia akari (strain Hartford), this protein is 4-hydroxy-tetrahydrodipicolinate reductase.